A 570-amino-acid chain; its full sequence is Double-stranded RNA-binding protein Staufen homolog 2 (570 aa).

The 68-residue stretch at 8-75 (TPVCLVNELA…ANKALTESTL (68 aa)) folds into the DRBM 1 domain. Disordered regions lie at residues 71 to 94 (TEST…PGSI) and 178 to 203 (ALQN…DDKD). The span at 83-94 (PKSNVNNNPGSI) shows a compositional bias: polar residues. Positions 95 to 181 (TPTVELNGLA…AMKALQALQN (87 aa)) constitute a DRBM 2 domain. A Phosphoserine modification is found at Ser-188. Basic and acidic residues predominate over residues 194–203 (SGKEMDDDKD). 2 DRBM domains span residues 207–274 (SEIS…ELKK) and 307–375 (NPIS…QLGY). 2 short sequence motifs (nuclear localization signal) span residues 273–291 (KKLP…FKKR) and 373–412 (LGYK…PKGI). Residues 381-413 (LQDPLDKTGENKGWSGPKPGFPEPTNNTPKGIL) are disordered. The tract at residues 381-570 (LQDPLDKTGE…QDCKKSKSAI (190 aa)) is required for dendritic transport. Residue Ser-395 is modified to Phosphoserine. Thr-405 carries the post-translational modification Phosphothreonine. A phosphoserine mark is found at Ser-416, Ser-426, Ser-440, Ser-455, and Ser-492. Positions 545 to 570 (LREKADNNQAKPASISQDCKKSKSAI) are disordered. Polar residues predominate over residues 551–561 (NNQAKPASISQ).

In terms of assembly, interacts with microtubules. Isoform 2 and isoform 3 may also interact with ribosomes, and this association is independent of translation. Identified in a mRNP complex, at least composed of DHX9, DDX3X, ELAVL1, HNRNPU, IGF2BP1, ILF3, PABPC1, PCBP2, PTBP2, STAU1, STAU2, SYNCRIP and YBX1. Interacts with the exportin XPO5. This requires RNA and RAN bound to GTP. Interacts with TRIM71 (via NHL repeats) in an RNA-dependent manner. Expressed in brain and neurons, where isoform 2 and isoform 3 appear to be the most abundant. Expressed at the neuromuscular junction of the extensor digitorum longus, tibialis anterior and soleus muscles. Expression at neuromuscular junctions is most pronounced in slow-twitch muscle. Also weakly expressed in heart, kidney, ovary and testis.

It localises to the cytoplasm. It is found in the nucleus. Its subcellular location is the nucleolus. The protein localises to the endoplasmic reticulum. Its function is as follows. RNA-binding protein required for the microtubule-dependent transport of neuronal RNA from the cell body to the dendrite. As protein synthesis occurs within the dendrite, the localization of specific mRNAs to dendrites may be a prerequisite for neurite outgrowth and plasticity at sites distant from the cell body. The protein is Double-stranded RNA-binding protein Staufen homolog 2 (Stau2) of Mus musculus (Mouse).